The following is a 224-amino-acid chain: Peroxiredoxin-6 (224 aa).

The region spanning 5 to 169 is the Thioredoxin domain; the sequence is LLLGDVAPNF…ILRVVISLQL (165 aa). Residues 31-40 form a required and sufficient for targeting to lysosomes and lamellar bodies region; it reads DSWGILFSHP. Residue Thr-44 is modified to Phosphothreonine. Cys-47 (cysteine sulfenic acid (-SOH) intermediate; for peroxidase activity) is an active-site residue. Lys-63 bears the N6-acetyllysine mark. At Tyr-89 the chain carries Phosphotyrosine. Asp-140 acts as the For phospholipase activity in catalysis. A Phosphothreonine; by MAPK modification is found at Thr-177. At Lys-209 the chain carries N6-acetyllysine; alternate. At Lys-209 the chain carries N6-succinyllysine; alternate.

It belongs to the peroxiredoxin family. Prx6 subfamily. In terms of assembly, homodimer. Interacts with GSTP1; mediates PRDX6 glutathionylation and regeneration. Interacts with APEX1. Interacts with STH. May interact with FAM168B. May interact with HTR2A. Irreversibly inactivated by overoxidation of Cys-47 to sulfinic acid (Cys-SO(2)H) and sulfonic acid (Cys-SO(3)H) forms upon oxidative stress. In terms of processing, phosphorylation at Thr-177 by MAP kinases increases the phospholipase activity of the enzyme. The phosphorylated form exhibits a greater lysophosphatidylcholine acyltransferase activity compared to the non-phosphorylated form.

It localises to the cytoplasm. It is found in the lysosome. The catalysed reaction is a hydroperoxide + 2 glutathione = an alcohol + glutathione disulfide + H2O. It catalyses the reaction a 1,2-diacyl-sn-glycero-3-phosphocholine + H2O = a 1-acyl-sn-glycero-3-phosphocholine + a fatty acid + H(+). It carries out the reaction a 1-acyl-sn-glycero-3-phosphocholine + an acyl-CoA = a 1,2-diacyl-sn-glycero-3-phosphocholine + CoA. The enzyme catalyses 1-hexadecanoyl-sn-glycero-3-phosphocholine + hexadecanoyl-CoA = 1,2-dihexadecanoyl-sn-glycero-3-phosphocholine + CoA. The catalysed reaction is 1,2-dihexadecanoyl-sn-glycero-3-phosphocholine + H2O = 1-hexadecanoyl-sn-glycero-3-phosphocholine + hexadecanoate + H(+). MJ33 or lithium;[(2R)-1-hexadecoxy-3-(2,2,2-trifluoroethoxy)propan-2-yl] methyl phosphate inhibits its phospholipase A2 activity. CI-976 or 2,2-Dimethyl-N-(2,4,6-trimethoxyphenyl)dodecanamide inhibits its lysophosphatidylcholine acyltransferase activity. Functionally, thiol-specific peroxidase that catalyzes the reduction of hydrogen peroxide and organic hydroperoxides to water and alcohols, respectively. Can reduce H(2)O(2) and short chain organic, fatty acid, and phospholipid hydroperoxides. Also has phospholipase activity, can therefore either reduce the oxidized sn-2 fatty acyl group of phospholipids (peroxidase activity) or hydrolyze the sn-2 ester bond of phospholipids (phospholipase activity). These activities are dependent on binding to phospholipids at acidic pH and to oxidized phospholipds at cytosolic pH. Plays a role in cell protection against oxidative stress by detoxifying peroxides and in phospholipid homeostasis. Exhibits acyl-CoA-dependent lysophospholipid acyltransferase which mediates the conversion of lysophosphatidylcholine (1-acyl-sn-glycero-3-phosphocholine or LPC) into phosphatidylcholine (1,2-diacyl-sn-glycero-3-phosphocholine or PC). Shows a clear preference for LPC as the lysophospholipid and for palmitoyl CoA as the fatty acyl substrate. This chain is Peroxiredoxin-6 (PRDX6), found in Homo sapiens (Human).